The following is a 504-amino-acid chain: MDLSPRNRPLLESSSLDSGGSLSSLDSSVFCSEGEGEPLALGDCLTVNVGGSRFVLSQQALSCFPHTRLGKLAVVVASYRRLGALAAAPSPLELCDDANPVDNEYFFDRSSQAFRYVLHYYRTGRLHVMEQLCALSFLQEIQYWGIDELSIDSCCRDRYFRRKELSETLDFKKDTDDQESQHESEQDFSQGPCPTVRQKLWDILEKPGSSTAARIFGVISIIFVAVSIVNMALMSAELSWLNLQLLEILEYVCISWFTGEFILRFLCVKDRCRFLRKVPNIIDLLAILPFYITLLVESLSGSHTTQELENVGRLVQVLRLLRALRMLKLGRHSTGLRSLGMTITQCYEEVGLLLLFLSVGISIFSTIEYFAEQSIPDTTFTSVPCAWWWATTSMTTVGYGDIRPDTTTGKIVAFMCILSGILVLALPIAIINDRFSACYFTLKLKEAAVRQREALKKLTKNIATDSYISVNLRDVYARSIMEMLRLKGRERASTRSSGGDDFWF.

Disordered stretches follow at residues 1 to 22 (MDLS…GGSL) and 172 to 193 (KKDT…QGPC). Over 1 to 214 (MDLSPRNRPL…EKPGSSTAAR (214 aa)) the chain is Cytoplasmic. Over residues 10 to 22 (LLESSSLDSGGSL) the composition is skewed to low complexity. Over residues 172–185 (KKDTDDQESQHESE) the composition is skewed to basic and acidic residues. The helical transmembrane segment at 215–235 (IFGVISIIFVAVSIVNMALMS) threads the bilayer. Topologically, residues 236 to 242 (AELSWLN) are extracellular. The helical transmembrane segment at 243–263 (LQLLEILEYVCISWFTGEFIL) threads the bilayer. Residues 264–280 (RFLCVKDRCRFLRKVPN) lie on the Cytoplasmic side of the membrane. The helical transmembrane segment at 281 to 301 (IIDLLAILPFYITLLVESLSG) threads the bilayer. Topologically, residues 302-313 (SHTTQELENVGR) are extracellular. Residues 314 to 335 (LVQVLRLLRALRMLKLGRHSTG) form a helical; Voltage-sensor membrane-spanning segment. The Cytoplasmic segment spans residues 336–349 (LRSLGMTITQCYEE). A helical transmembrane segment spans residues 350-370 (VGLLLLFLSVGISIFSTIEYF). Residues 396 to 401 (TVGYGD) carry the Selectivity filter motif. The chain crosses the membrane as a helical span at residues 411 to 431 (IVAFMCILSGILVLALPIAII). The Cytoplasmic portion of the chain corresponds to 432-504 (NDRFSACYFT…RSSGGDDFWF (73 aa)).

It belongs to the potassium channel family. V (TC 1.A.1.2) subfamily. Kv8.1/KCNV1 sub-subfamily. As to quaternary structure, heteromultimer with KCNB1 and KCNB2. Interacts with KCNC4 and KCND1. As to expression, detected in brain, throughout layers II, IV and VI of the brain cortex. Detected in cerebellum and hippocampus, in the granule cell layer, Purkinje cell layer, pyramidal cell layer and dentate gyrus. Detected at lower levels in olfactory bulb, amygdala, thalamus, hypothalamus, midbrain and brainstem.

The protein resides in the cell membrane. In terms of biological role, potassium channel subunit that does not form functional channels by itself. Modulates KCNB1 and KCNB2 channel activity by shifting the threshold for inactivation to more negative values and by slowing the rate of inactivation. Can down-regulate the channel activity of KCNB1, KCNB2, KCNC4 and KCND1, possibly by trapping them in intracellular membranes. The polypeptide is Potassium voltage-gated channel subfamily V member 1 (KCNV1) (Mesocricetus auratus (Golden hamster)).